Consider the following 121-residue polypeptide: UPF0102 protein DSY2577 (121 aa).

Belongs to the UPF0102 family.

This Desulfitobacterium hafniense (strain Y51) protein is UPF0102 protein DSY2577.